The following is a 93-amino-acid chain: DNA-directed RNA polymerase subunit Rpo11 (93 aa).

Belongs to the archaeal Rpo11/eukaryotic RPB11/RPC19 RNA polymerase subunit family. Part of the RNA polymerase complex.

It is found in the cytoplasm. The catalysed reaction is RNA(n) + a ribonucleoside 5'-triphosphate = RNA(n+1) + diphosphate. Functionally, DNA-dependent RNA polymerase (RNAP) catalyzes the transcription of DNA into RNA using the four ribonucleoside triphosphates as substrates. The protein is DNA-directed RNA polymerase subunit Rpo11 of Sulfurisphaera tokodaii (strain DSM 16993 / JCM 10545 / NBRC 100140 / 7) (Sulfolobus tokodaii).